Reading from the N-terminus, the 109-residue chain is Thiosulfate sulfurtransferase GlpE (109 aa).

Positions 16-104 (REQGAVVVDI…WRTTYPAEIS (89 aa)) constitute a Rhodanese domain. C64 serves as the catalytic Cysteine persulfide intermediate.

Belongs to the GlpE family.

Its subcellular location is the cytoplasm. It carries out the reaction thiosulfate + hydrogen cyanide = thiocyanate + sulfite + 2 H(+). The catalysed reaction is thiosulfate + [thioredoxin]-dithiol = [thioredoxin]-disulfide + hydrogen sulfide + sulfite + 2 H(+). Transferase that catalyzes the transfer of sulfur from thiosulfate to thiophilic acceptors such as cyanide or dithiols. May function in a CysM-independent thiosulfate assimilation pathway by catalyzing the conversion of thiosulfate to sulfite, which can then be used for L-cysteine biosynthesis. The protein is Thiosulfate sulfurtransferase GlpE of Pseudomonas fluorescens (strain SBW25).